Here is a 710-residue protein sequence, read N- to C-terminus: Interferon-induced GTP-binding protein Mx2 (710 aa).

The interval 1–51 (MSMSFRPLKYKRHTQTSTQHHPKQDIYFHQQPPGPPLGQTMSPPQWQVEES) is disordered. A compositionally biased stretch (polar residues) spans 39–50 (QTMSPPQWQVEE). The Dynamin-type G domain maps to 112–383 (DLALPAIAVI…LIWHINKSLP (272 aa)). The tract at residues 122-129 (GDQSSGKS) is G1 motif. 122–129 (GDQSSGKS) provides a ligand contact to GTP. The segment at 147–149 (ITR) is G2 motif. Positions 221–224 (DLPG) are G3 motif. GTP-binding positions include 221 to 225 (DLPGI) and 290 to 293 (TKPD). Residues 290-293 (TKPD) are G4 motif. The tract at residues 322–325 (KCRG) is G5 motif. In terms of domain architecture, GED spans 619 to 710 (IVEIGVHLNA…ALYEFPHFKG (92 aa)).

Belongs to the TRAFAC class dynamin-like GTPase superfamily. Dynamin/Fzo/YdjA family.

The protein localises to the cytoplasm. The protein resides in the nucleus. Functionally, interferon-induced dynamin-like GTPase with antiviral activity against vesicular stomatitis virus (VSV). The protein is Interferon-induced GTP-binding protein Mx2 (MX2) of Bos taurus (Bovine).